The chain runs to 155 residues: Ribosomal RNA large subunit methyltransferase H (155 aa).

S-adenosyl-L-methionine is bound by residues Gly104 and 123–128; that span reads LSRLTL.

The protein belongs to the RNA methyltransferase RlmH family. In terms of assembly, homodimer.

It is found in the cytoplasm. The enzyme catalyses pseudouridine(1915) in 23S rRNA + S-adenosyl-L-methionine = N(3)-methylpseudouridine(1915) in 23S rRNA + S-adenosyl-L-homocysteine + H(+). Functionally, specifically methylates the pseudouridine at position 1915 (m3Psi1915) in 23S rRNA. The polypeptide is Ribosomal RNA large subunit methyltransferase H (Marinomonas sp. (strain MWYL1)).